Consider the following 245-residue polypeptide: Heavy metal-associated isoprenylated plant protein 1 (245 aa).

One can recognise an HMA 1 domain in the interval 28 to 92 (PVHVVLKIDF…KLQKKSKKKV (65 aa)). 2 residues coordinate a metal cation: C39 and C42. Residues 91-113 (KVELISPKPKKDTKENNEKKAND) are disordered. Residues 99-113 (PKKDTKENNEKKAND) are compositionally biased toward basic and acidic residues. Positions 121-188 (VTTVVLKVNC…KLKKTVQVVP (68 aa)) constitute an HMA 2 domain. Positions 132 and 135 each coordinate a metal cation. A Cysteine methyl ester modification is found at C242. The S-farnesyl cysteine moiety is linked to residue C242. Residues 243–245 (SVM) constitute a propeptide, removed in mature form.

It belongs to the HIPP family.

Heavy-metal-binding protein. This chain is Heavy metal-associated isoprenylated plant protein 1, found in Arabidopsis thaliana (Mouse-ear cress).